The primary structure comprises 146 residues: Large ribosomal subunit protein bL21 (146 aa).

A disordered region spans residues 115–146 (KSISLGKSAPKSSAKKETVKKETKPKSEKSTN). Residues 128–146 (AKKETVKKETKPKSEKSTN) show a composition bias toward basic and acidic residues.

This sequence belongs to the bacterial ribosomal protein bL21 family. As to quaternary structure, part of the 50S ribosomal subunit. Contacts protein L20.

Its function is as follows. This protein binds to 23S rRNA in the presence of protein L20. This is Large ribosomal subunit protein bL21 from Prochlorococcus marinus (strain MIT 9312).